The chain runs to 118 residues: DNA-binding protein inhibitor ID-3-B (118 aa).

The 53-residue stretch at 32 to 84 (SLKGAGIDETMGLLYDMNGCYSKLKELVPGIPQGSKLSQVEILQHVIDYIFDL) folds into the bHLH domain.

As to quaternary structure, homodimer. Heterodimer with other HLH proteins. Interacts (via HLH domain) with the bHLH protein hes4/hairy2 (via Orange domain). Interacts with stat3.

The protein localises to the nucleus. Its function is as follows. Transcriptional regulator (lacking a basic DNA binding domain) which negatively regulates the basic helix-loop-helix (bHLH) transcription factors by forming heterodimers and inhibiting their DNA binding and transcriptional activity. Influences cell fate decisions in the embryo by sequestering and blocking the activity of the bHLH transcription factors that control these decisions. Inhibits the binding of myogenic bHLH-containing complexes to E-box DNA, thereby preventing activation of muscle-specific target genes. Also inhibits the activity of neurogenic factor neurod1/neuroD. Plays a role in cell cycle progression and survival of neural crest progenitors; binding to either hes4-B/hairy2b or stat3 blocks the formation of transcription factor complexes and the repressor function of hes4-B/hairy2B, to allow neural crest progenitors to differentiate. May play a role in the regulation of the circadian rhythm. This is DNA-binding protein inhibitor ID-3-B (id3-b) from Xenopus laevis (African clawed frog).